The chain runs to 477 residues: Minor capsid protein (477 aa).

The protein belongs to the closteroviridae minor capsid protein family.

The protein localises to the virion. Minor capsid protein that encapsidates the 5'-terminal portion of the viral genome. The sequence is that of Minor capsid protein from Vitis vinifera (Grape).